A 321-amino-acid polypeptide reads, in one-letter code: MKVRLGVDMMGGDHDPLVVWEALGEVLLSSIGEQPVEFTVFATSDVHHQLMNSPLSRSVRIVTAEDFVSMEDSLLAAVRKKRSSMALGLDALQQGDLDGFVSSGNTAALVTLARSKIPMIPAVPRPALLVSVPTLSGFAVILDVGATVSVNPDEMVGFARMGLAYRQSLSSNSNQPFTLGLLNIGSEERKGTDSHKQTFRMLRNIFGSAFLGNIESGDVFSGKVDIVVTDGFTGNVFLKTAEGLFDFLRRILGDRLEKSIKMQFDYTIYPGSIISGLSRLVIKCHGKSHGTALFGGISGAIDLARANVCSRIADRFGDNVV.

The protein belongs to the PlsX family. In terms of assembly, homodimer. Probably interacts with PlsY.

Its subcellular location is the cytoplasm. The enzyme catalyses a fatty acyl-[ACP] + phosphate = an acyl phosphate + holo-[ACP]. It participates in lipid metabolism; phospholipid metabolism. Functionally, catalyzes the reversible formation of acyl-phosphate (acyl-PO(4)) from acyl-[acyl-carrier-protein] (acyl-ACP). This enzyme utilizes acyl-ACP as fatty acyl donor, but not acyl-CoA. The polypeptide is Phosphate acyltransferase (Chlamydia trachomatis serovar A (strain ATCC VR-571B / DSM 19440 / HAR-13)).